Consider the following 414-residue polypeptide: BICD family-like cargo adapter 2 (414 aa).

Residues 34–341 are a coiled coil; the sequence is GQALLEKNEE…DALNQQLLNT (308 aa). Basic and acidic residues predominate over residues 372 to 384; the sequence is QEKEKENNKERTG. Residues 372–399 form a disordered region; that stretch reads QEKEKENNKERTGFQRGTRTTKSLRLRG.

In Danio rerio (Zebrafish), this protein is BICD family-like cargo adapter 2 (bicdl2).